A 93-amino-acid polypeptide reads, in one-letter code: Acylphosphatase (93 aa).

One can recognise an Acylphosphatase-like domain in the interval 6–93; the sequence is RAHVFISGRV…GEERGFSIIW (88 aa). Catalysis depends on residues Arg-21 and Asn-39.

This sequence belongs to the acylphosphatase family.

The enzyme catalyses an acyl phosphate + H2O = a carboxylate + phosphate + H(+). This chain is Acylphosphatase (acyP), found in Roseiflexus sp. (strain RS-1).